The following is a 1380-amino-acid chain: MDLSLQLQIHGALINKGPSCTSYWASSSSLSLPRDFISSSTFLLHRRLRRRSCSRSRGIRLRRSGFSAMPCSSSDTLTASRVGCGGGGGGGAVGGGAENASVANFKLNESTFIASLMPKKEIRADCFIEAHPEYDGRGVVIAIFDSGFDPSAAGLHVTSDGKPKVLDVIDCTGSGDIDTSTVVKANEDGHIRGASGATLVVNSSWKNPTGEWRVGSKLVYQLFTDDLTSRVKKERRKSWDEKNQEEIAKAVNNLYDFDQKHSKVEDAKLKKTREDLQSKVDFLKKQADKYEDKGPVIDAVVWHDGEVWRVALDTQSLEEDPDSGKLADFSPLTNYRIERKYGVFSRLDACSFVANVYDEGKVLSIVTDSSPHGTHVAGIATAHHPEEHLLNGVAPGAQIISCKIGDSRLGSMETGTGLTRALIAALEHNCDLVNMSYGEPALLPDYGRFVDLVTEAVNKRRLIFVSSAGNSGPALTTVGAPGGTTSSIIGVGAYVSPAMAAGAHSVVEPPSEGLEYTWSSRGPTSDGDLGVCISAPGGAVAPVPTWTLQRRMLMNGTSMASPSACGAIALLLSAMKAEGIPVSPYSVRRALENTSTPVGDLPEDKLTTGQGLMQVDKAYEYLKQFQDYPCVFYQIKVNLSGKTIPTSRGIYLREGTACRQSTEWTIQVDPKFHEGASNLKELVPFEECLELHSTDEGVVRVPDYLLLTNNGRGFNVVVDPTNLGDGVHYFEVYGIDCKAPERGPLFRIPVTIIIPKTVANQPPVISFQQMSFISGHIERRYIEVPHGATWAEATMRTSGFDTTRRFYIDTLQVCPLRRPIKWESAPTFASPSAKSFVFPVVSGQTMELAIAQFWSSGLGSREPTIVDFEIEFHGVGVDKEELLLDGSEAPIKVEAEALLASEKLVPIAVLNKIRVPYQPIDAQLKTLSTGRDRLLSGKQILALTLTYKFKLEDSAEVKPYIPLLNNRIYDTKFESQFFMISDTNKRVYAMGDVYPESSKLPKGEYKLQLYLRHENVELLEKLKQLTVFIERNMGEIRLNLHSEPDGPFTGNGAFKSSVLMPGVKEAFYLGPPTKDKLPKNTPQGSMLVGEISYGKLSFDEKEGKNPKDNPVSYPISYVVPPNKPEEDKKAASAPTCSKSVSERLEQEVRDTKIKFLGNLKQETEEERSEWRKLCTCLKSEYPDYTPLLAKILEGLLSRSDAGDKISHHEEIIEAANEVVRSVDVDELARFLLDKTEPEDDEAEKLKKKMEVTRDQLADALYQKGLAMARIENLKGEKEGEGEEESSQKDKFEENFKELTKWVDVKSSKYGTLTVLREKRLSRLGTALKVLDDLIQNENETANKKLYELKLDLLEEIGWSHLVTYEKQWMQVRFPKSLPLF.

Residues 110–619 (STFIASLMPK…QGLMQVDKAY (510 aa)) form the Peptidase S8 domain. Active-site charge relay system residues include Asp145, His372, and Ser558. Residues 1099–1143 (DEKEGKNPKDNPVSYPISYVVPPNKPEEDKKAASAPTCSKSVSER) form a disordered region. The segment covering 1110–1120 (PVSYPISYVVP) has biased composition (low complexity). Coiled coils occupy residues 1152 to 1181 (KIKF…KSEY) and 1238 to 1300 (EDDE…ELTK).

This sequence belongs to the peptidase S8 family. Assembles into a large oligomeric complex containing two related proteins 153 and 142 kDa that are derived from the single TPP2 gene. The 142 kDa form mainly differs from the 153 kDa form by a truncation at the C-terminal end.

The catalysed reaction is Release of an N-terminal tripeptide from a polypeptide.. Inhibited by alanine-alanine-phenylalanine-chloromethylketone, butabindide and phenylmethanesulfonyl fluoride (PMSF), but not by leupeptin, N-ethylmaleimide, EDTA, MG132 and lactacystin. In terms of biological role, serine protease of the proteasome pathway that may function with the 20S proteasome to degrade oxidized proteins generated by environmental stress. This chain is Tripeptidyl-peptidase 2 (TPP2), found in Arabidopsis thaliana (Mouse-ear cress).